Here is a 265-residue protein sequence, read N- to C-terminus: U6 snRNA phosphodiesterase 1 (265 aa).

The tract at residues 1–67 (MSAAPLVGYS…EGPVDDSAKH (67 aa)) is disordered. Positions 20 to 32 (AGARVRPGAEGRS) are enriched in basic and acidic residues. His120 serves as the catalytic Proton acceptor. AMP is bound at residue 120-122 (HLS). Residues Gln164, Tyr202, and 206–210 (SFHIS) contribute to the UMP site. AMP contacts are provided by residues Tyr202 and 204-210 (DPSFHIS). His208 (proton donor) is an active-site residue.

This sequence belongs to the 2H phosphoesterase superfamily. USB1 family. Interacts with PLRG1, CDC5L and PRPF19.

It is found in the nucleus. The enzyme catalyses a 3'-end uridylyl-uridine-RNA = a 3'-end 2',3'-cyclophospho-uridine-RNA + uridine. It catalyses the reaction a 3'-end uridylyl-adenosine-RNA = a 3'-end 2',3'-cyclophospho-uridine-RNA + adenosine. Its function is as follows. 3'-5' RNA exonuclease that trims the 3' end of oligo(U) and oligo(A) tracts of the pre-U6 small nuclear RNA (snRNA) molecule, leading to the formation of a mature U6 snRNA 3' end-terminated with a 2',3'-cyclic phosphate. Participates in the U6 snRNA 3' end processing that prevents U6 snRNA degradation. In addition also removes uridines from the 3' end of U6atac snRNA and possibly the vault RNA VTRNA1-1. The sequence is that of U6 snRNA phosphodiesterase 1 from Bos taurus (Bovine).